Reading from the N-terminus, the 167-residue chain is NADH-ubiquinone oxidoreductase chain 6 (167 aa).

4 helical membrane-spanning segments follow: residues 24 to 44, 54 to 74, 85 to 105, and 135 to 155; these read PYFG…IILA, LLLI…ALVL, VLMK…GGYL, and WLLI…ILEI.

It belongs to the complex I subunit 6 family.

It is found in the mitochondrion membrane. It carries out the reaction a ubiquinone + NADH + 5 H(+)(in) = a ubiquinol + NAD(+) + 4 H(+)(out). In terms of biological role, core subunit of the mitochondrial membrane respiratory chain NADH dehydrogenase (Complex I) that is believed to belong to the minimal assembly required for catalysis. Complex I functions in the transfer of electrons from NADH to the respiratory chain. The immediate electron acceptor for the enzyme is believed to be ubiquinone. In Myxine glutinosa (Atlantic hagfish), this protein is NADH-ubiquinone oxidoreductase chain 6 (MT-ND6).